The chain runs to 478 residues: 3-isopropylmalate dehydratase large subunit (478 aa).

Positions 357, 418, and 421 each coordinate [4Fe-4S] cluster.

It belongs to the aconitase/IPM isomerase family. LeuC type 1 subfamily. As to quaternary structure, heterodimer of LeuC and LeuD. Requires [4Fe-4S] cluster as cofactor.

The enzyme catalyses (2R,3S)-3-isopropylmalate = (2S)-2-isopropylmalate. It participates in amino-acid biosynthesis; L-leucine biosynthesis; L-leucine from 3-methyl-2-oxobutanoate: step 2/4. Its function is as follows. Catalyzes the isomerization between 2-isopropylmalate and 3-isopropylmalate, via the formation of 2-isopropylmaleate. The polypeptide is 3-isopropylmalate dehydratase large subunit (Novosphingobium aromaticivorans (strain ATCC 700278 / DSM 12444 / CCUG 56034 / CIP 105152 / NBRC 16084 / F199)).